The following is a 348-amino-acid chain: MAEMSFLSSEVLGGDFVSPFDQLGLGAEESLGLLDDNLEVAKHFKHHGFSCDKAKAGSSEWLAVDWLVSDNSKEDAFSGTDWMVEKMDLKEFDFDILFSKDDLETMPDELLATLDDTCDLFQPLVQETNKEPPQIVNPIGHLPEGLPTIDQGAPFTFFQPLPPSPGTLSSTPDHSFSLELCSEVVIPEGDSKPDSTTTGFPQCIKEEDAPSDNDSGICMSPDSSLGSPQDSPSTSRGSPNKSLLSPGALSGSSRPKPYDPPGEKMVAAKVKGEKLDKKLKKMEQNKTAATRYRQKKRAEQEALTGECKELEKKNEALKEKADSLAKEIQYLKDQIEEVRKAREKKRVL.

Lys53 is covalently cross-linked (Glycyl lysine isopeptide (Lys-Gly) (interchain with G-Cter in SUMO2)). Disordered regions lie at residues Gln151–His174 and Pro187–Met265. Residues Ser211, Ser215, Ser220, Ser227, and Ser231 each carry the phosphoserine modification. The short motif at Ser211–Ser220 is the BetaTrCP degron motif element. Polar residues predominate over residues Pro221–Lys241. Pro232 carries the 4-hydroxyproline modification. A phosphoserine mark is found at Ser242 and Ser245. Over residues Ser242–Ser253 the composition is skewed to low complexity. Glycyl lysine isopeptide (Lys-Gly) (interchain with G-Cter in SUMO2) cross-links involve residues Lys256, Lys264, and Lys269. Residues Leu275–Val338 enclose the bZIP domain. Positions Lys277–Arg297 are basic motif. Residues Ala302–Val338 are interaction with GABBR1. Residues Leu303–Leu331 are leucine-zipper. Residue Lys308 is modified to N6-acetyllysine.

Belongs to the bZIP family. Binds DNA as a homodimer and as a heterodimer. Heterodimer; heterodimerizes with CEBPB. Heterodimer; heterodimerizes with DDIT3/CHOP. Interacts with CEP290 (via an N-terminal region). Interacts with NEK6, DAPK2 (isoform 2) and ZIPK/DAPK3. Interacts (via its leucine zipper domain) with GABBR1 and GABBR2 (via their C-termini). Forms a heterodimer with TXLNG in osteoblasts. Interacts (via its DNA binding domain) with FOXO1 (C-terminal half); the interaction occurs in osteoblasts and regulates glucose homeostasis through suppression of beta-cell proliferation and a decrease in insulin production. Interacts with SATB2; the interaction results in enhanced DNA binding and transactivation by these transcription factors. Interacts with ABRAXAS2. Interacts with TRIB3, inhibiting the transactivation activity of ATF4. Interacts with DISC1; which inhibits ATF4 transcription factor activity by disrupting ATF4 dimerization and DNA-binding. Interacts with EP300/p300; EP300/p300 stabilizes ATF4 and increases its transcriptional activity independently of its catalytic activity by preventing its ubiquitination. In terms of processing, ubiquitinated by SCF(BTRC) in response to mTORC1 signal, followed by proteasomal degradation and leading to down-regulate expression of SIRT4. Interaction with EP300/p300 inhibits ubiquitination by SCF(BTRC). Phosphorylation at Ser-242 by RPS6KA3/RSK2 in osteoblasts enhances transactivation activity and promotes osteoblast differentiation. Phosphorylated on the betaTrCP degron motif at Ser-215, followed by phosphorylation at Ser-220, Ser-227, Ser-231 and Ser-245, promoting interaction with BTRC and ubiquitination. Phosphorylation is promoted by mTORC1. Phosphorylation at Ser-211 by CK2 decreases its stability. Phosphorylated by NEK6. Post-translationally, hydroxylated by PHD3, leading to decreased protein stability.

It localises to the nucleus. The protein localises to the nucleus speckle. Its subcellular location is the cytoplasm. The protein resides in the cell membrane. It is found in the cytoskeleton. It localises to the microtubule organizing center. The protein localises to the centrosome. Its function is as follows. Transcription factor that binds the cAMP response element (CRE) (consensus: 5'-GTGACGT[AC][AG]-3') and displays two biological functions, as regulator of metabolic and redox processes under normal cellular conditions, and as master transcription factor during integrated stress response (ISR). Binds to asymmetric CRE's as a heterodimer and to palindromic CRE's as a homodimer. Core effector of the ISR, which is required for adaptation to various stress such as endoplasmic reticulum (ER) stress, amino acid starvation, mitochondrial stress or oxidative stress. During ISR, ATF4 translation is induced via an alternative ribosome translation re-initiation mechanism in response to EIF2S1/eIF-2-alpha phosphorylation, and stress-induced ATF4 acts as a master transcription factor of stress-responsive genes in order to promote cell recovery. Promotes the transcription of genes linked to amino acid sufficiency and resistance to oxidative stress to protect cells against metabolic consequences of ER oxidation. Activates the transcription of NLRP1, possibly in concert with other factors in response to ER stress. Activates the transcription of asparagine synthetase (ASNS) in response to amino acid deprivation or ER stress. However, when associated with DDIT3/CHOP, the transcriptional activation of the ASNS gene is inhibited in response to amino acid deprivation. Together with DDIT3/CHOP, mediates programmed cell death by promoting the expression of genes involved in cellular amino acid metabolic processes, mRNA translation and the terminal unfolded protein response (terminal UPR), a cellular response that elicits programmed cell death when ER stress is prolonged and unresolved. Activates the expression of COX7A2L/SCAF1 downstream of the EIF2AK3/PERK-mediated unfolded protein response, thereby promoting formation of respiratory chain supercomplexes and increasing mitochondrial oxidative phosphorylation. Together with DDIT3/CHOP, activates the transcription of the IRS-regulator TRIB3 and promotes ER stress-induced neuronal cell death by regulating the expression of BBC3/PUMA in response to ER stress. May cooperate with the UPR transcriptional regulator QRICH1 to regulate ER protein homeostasis which is critical for cell viability in response to ER stress. In the absence of stress, ATF4 translation is at low levels and it is required for normal metabolic processes such as embryonic lens formation, fetal liver hematopoiesis, bone development and synaptic plasticity. Acts as a regulator of osteoblast differentiation in response to phosphorylation by RPS6KA3/RSK2: phosphorylation in osteoblasts enhances transactivation activity and promotes expression of osteoblast-specific genes and post-transcriptionally regulates the synthesis of Type I collagen, the main constituent of the bone matrix. Cooperates with FOXO1 in osteoblasts to regulate glucose homeostasis through suppression of beta-cell production and decrease in insulin production. Activates transcription of SIRT4. Regulates the circadian expression of the core clock component PER2 and the serotonin transporter SLC6A4. Binds in a circadian time-dependent manner to the cAMP response elements (CRE) in the SLC6A4 and PER2 promoters and periodically activates the transcription of these genes. Mainly acts as a transcriptional activator in cellular stress adaptation, but it can also act as a transcriptional repressor: acts as a regulator of synaptic plasticity by repressing transcription, thereby inhibiting induction and maintenance of long-term memory. Regulates synaptic functions via interaction with DISC1 in neurons, which inhibits ATF4 transcription factor activity by disrupting ATF4 dimerization and DNA-binding. In Bos taurus (Bovine), this protein is Cyclic AMP-dependent transcription factor ATF-4.